A 124-amino-acid chain; its full sequence is Small ribosomal subunit protein uS12 (124 aa).

Residues M1–D25 form a disordered region.

It belongs to the universal ribosomal protein uS12 family. Part of the 30S ribosomal subunit. Contacts proteins S8 and S17. May interact with IF1 in the 30S initiation complex.

With S4 and S5 plays an important role in translational accuracy. In terms of biological role, interacts with and stabilizes bases of the 16S rRNA that are involved in tRNA selection in the A site and with the mRNA backbone. Located at the interface of the 30S and 50S subunits, it traverses the body of the 30S subunit contacting proteins on the other side and probably holding the rRNA structure together. The combined cluster of proteins S8, S12 and S17 appears to hold together the shoulder and platform of the 30S subunit. This chain is Small ribosomal subunit protein uS12, found in Xylella fastidiosa (strain 9a5c).